Reading from the N-terminus, the 501-residue chain is MELSYPEKLTLIKLAELKRAKVEELVKESGLEQVAVMRALLGLQAKGLAKLHERSERVVKLTETGMKYAQIGLPEWRALKVLREKGKATLDDLKDVLSEDELKPIVGLLRREGWANVRKEDGKLVLEITEKGREASERPIDKALKLLAERGEVPVKEIEKLVPVNELKRRKIGEEDVITERVAEITEKGEELVKKGLELKKEVSVLTPELIKSGKWREVEFRKFDIKAPVRRIYPGKKQPYRAFLDKIRRRLIEMGFIEMTVDSLIETQFWNFDALFQPQNHPAREWTDTYQLKYPKVGSLPDEELVARVKAAHEHGGDTGSRGWGYVWSPERAMLLMPRAHGTALDARQLAKGVEIPGKYFTIQRVFRPDVLDRTHLIEFNQIDGFVVGEDLNFRHLLGILKRFAVEIAGAKKVKFLPDYYPFTEPSVQMSAYHPELGWVEFGGAGIFREEMTKALGIDVPVIAWGIGIDRLAMFKLGIDDIRYLFSYDLRWLREARLVW.

Residues T344, 383-385, and F424 each bind L-phenylalanine; that span reads QID. E426 serves as a coordination point for Mg(2+). F449 provides a ligand contact to L-phenylalanine.

The protein belongs to the class-II aminoacyl-tRNA synthetase family. Phe-tRNA synthetase alpha subunit type 2 subfamily. As to quaternary structure, tetramer of two alpha and two beta subunits. It depends on Mg(2+) as a cofactor.

It is found in the cytoplasm. It catalyses the reaction tRNA(Phe) + L-phenylalanine + ATP = L-phenylalanyl-tRNA(Phe) + AMP + diphosphate + H(+). The chain is Phenylalanine--tRNA ligase alpha subunit from Thermococcus kodakarensis (strain ATCC BAA-918 / JCM 12380 / KOD1) (Pyrococcus kodakaraensis (strain KOD1)).